The chain runs to 571 residues: Proline--tRNA ligase (571 aa).

This sequence belongs to the class-II aminoacyl-tRNA synthetase family. ProS type 1 subfamily. In terms of assembly, homodimer.

Its subcellular location is the cytoplasm. It carries out the reaction tRNA(Pro) + L-proline + ATP = L-prolyl-tRNA(Pro) + AMP + diphosphate. Catalyzes the attachment of proline to tRNA(Pro) in a two-step reaction: proline is first activated by ATP to form Pro-AMP and then transferred to the acceptor end of tRNA(Pro). As ProRS can inadvertently accommodate and process non-cognate amino acids such as alanine and cysteine, to avoid such errors it has two additional distinct editing activities against alanine. One activity is designated as 'pretransfer' editing and involves the tRNA(Pro)-independent hydrolysis of activated Ala-AMP. The other activity is designated 'posttransfer' editing and involves deacylation of mischarged Ala-tRNA(Pro). The misacylated Cys-tRNA(Pro) is not edited by ProRS. This chain is Proline--tRNA ligase, found in Actinobacillus pleuropneumoniae serotype 7 (strain AP76).